Consider the following 211-residue polypeptide: Thiamine-phosphate synthase (211 aa).

Residues 37–41 (QLRIK) and N69 each bind 4-amino-2-methyl-5-(diphosphooxymethyl)pyrimidine. Mg(2+)-binding residues include D70 and D89. S108 lines the 4-amino-2-methyl-5-(diphosphooxymethyl)pyrimidine pocket. A 2-[(2R,5Z)-2-carboxy-4-methylthiazol-5(2H)-ylidene]ethyl phosphate-binding site is contributed by 134–136 (TQT). Residue K137 coordinates 4-amino-2-methyl-5-(diphosphooxymethyl)pyrimidine. 2-[(2R,5Z)-2-carboxy-4-methylthiazol-5(2H)-ylidene]ethyl phosphate-binding positions include G166 and 186 to 187 (VS).

The protein belongs to the thiamine-phosphate synthase family. Mg(2+) is required as a cofactor.

The catalysed reaction is 2-[(2R,5Z)-2-carboxy-4-methylthiazol-5(2H)-ylidene]ethyl phosphate + 4-amino-2-methyl-5-(diphosphooxymethyl)pyrimidine + 2 H(+) = thiamine phosphate + CO2 + diphosphate. It catalyses the reaction 2-(2-carboxy-4-methylthiazol-5-yl)ethyl phosphate + 4-amino-2-methyl-5-(diphosphooxymethyl)pyrimidine + 2 H(+) = thiamine phosphate + CO2 + diphosphate. The enzyme catalyses 4-methyl-5-(2-phosphooxyethyl)-thiazole + 4-amino-2-methyl-5-(diphosphooxymethyl)pyrimidine + H(+) = thiamine phosphate + diphosphate. It functions in the pathway cofactor biosynthesis; thiamine diphosphate biosynthesis; thiamine phosphate from 4-amino-2-methyl-5-diphosphomethylpyrimidine and 4-methyl-5-(2-phosphoethyl)-thiazole: step 1/1. Functionally, condenses 4-methyl-5-(beta-hydroxyethyl)thiazole monophosphate (THZ-P) and 2-methyl-4-amino-5-hydroxymethyl pyrimidine pyrophosphate (HMP-PP) to form thiamine monophosphate (TMP). The sequence is that of Thiamine-phosphate synthase from Escherichia coli O6:H1 (strain CFT073 / ATCC 700928 / UPEC).